The following is a 108-amino-acid chain: UPF0145 protein sll118 (108 aa).

Belongs to the UPF0145 family.

The polypeptide is UPF0145 protein sll118 (Synechocystis sp. (strain ATCC 27184 / PCC 6803 / Kazusa)).